The chain runs to 140 residues: Ribonuclease P protein component (140 aa).

The protein belongs to the RnpA family. As to quaternary structure, consists of a catalytic RNA component (M1 or rnpB) and a protein subunit.

It carries out the reaction Endonucleolytic cleavage of RNA, removing 5'-extranucleotides from tRNA precursor.. RNaseP catalyzes the removal of the 5'-leader sequence from pre-tRNA to produce the mature 5'-terminus. It can also cleave other RNA substrates such as 4.5S RNA. The protein component plays an auxiliary but essential role in vivo by binding to the 5'-leader sequence and broadening the substrate specificity of the ribozyme. The protein is Ribonuclease P protein component of Ralstonia pickettii (strain 12J).